The sequence spans 129 residues: Follitropin subunit beta (129 aa).

Residues 1 to 20 (MKTVQFCFLFCCWKAICCNS) form the signal peptide. 6 disulfides stabilise this stretch: Cys-21–Cys-69, Cys-35–Cys-84, Cys-38–Cys-122, Cys-46–Cys-100, Cys-50–Cys-102, and Cys-105–Cys-112. 2 N-linked (GlcNAc...) asparagine glycosylation sites follow: Asn-25 and Asn-42.

This sequence belongs to the glycoprotein hormones subunit beta family. As to quaternary structure, heterodimer. The active follitropin is a heterodimer composed of an alpha chain/CGA shared with other hormones and a unique beta chain/FSHB shown here.

The protein resides in the secreted. In terms of biological role, together with the alpha chain CGA constitutes follitropin, the follicle-stimulating hormone, and provides its biological specificity to the hormone heterodimer. Binds FSHR, a G protein-coupled receptor, on target cells to activate downstream signaling pathways. Follitropin is involved in follicle development and spermatogenesis in reproductive organs. The protein is Follitropin subunit beta (FSHB) of Aotus nancymaae (Ma's night monkey).